The chain runs to 111 residues: MSFSECPLVISACKKFLQKRITIENEALINALITALAQTSTLNDLCLLPIQTYLLSYKNAFEWIHFVCIAITTILDNKYNWKNCTVDINYIFLHVTYIYNIKTKEYLDYCS.

It belongs to the asfivirus E111R family.

This is an uncharacterized protein from African swine fever virus (strain Badajoz 1971 Vero-adapted) (Ba71V).